Reading from the N-terminus, the 193-residue chain is Orotate phosphoribosyltransferase (193 aa).

5-phospho-alpha-D-ribose 1-diphosphate contacts are provided by residues Arg102, Lys103, Lys106, His108, and Glu129–Ser137. 2 residues coordinate orotate: Thr133 and Arg161.

Belongs to the purine/pyrimidine phosphoribosyltransferase family. PyrE subfamily. As to quaternary structure, homodimer. It depends on Mg(2+) as a cofactor.

The catalysed reaction is orotidine 5'-phosphate + diphosphate = orotate + 5-phospho-alpha-D-ribose 1-diphosphate. It participates in pyrimidine metabolism; UMP biosynthesis via de novo pathway; UMP from orotate: step 1/2. Its function is as follows. Catalyzes the transfer of a ribosyl phosphate group from 5-phosphoribose 1-diphosphate to orotate, leading to the formation of orotidine monophosphate (OMP). The polypeptide is Orotate phosphoribosyltransferase (Prochlorococcus marinus (strain NATL1A)).